Here is a 78-residue protein sequence, read N- to C-terminus: Beta-defensin 105A (78 aa).

The signal sequence occupies residues 1-27; that stretch reads MALIRKTFYFLFAVFFILVQLPSGCQA. 3 disulfides stabilise this stretch: Cys43-Cys74, Cys53-Cys67, and Cys57-Cys73.

Belongs to the beta-defensin family.

The protein localises to the secreted. In terms of biological role, has antimicrobial activity. The sequence is that of Beta-defensin 105A (DEFB105A) from Gorilla gorilla gorilla (Western lowland gorilla).